We begin with the raw amino-acid sequence, 488 residues long: 3-octaprenyl-4-hydroxybenzoate carboxy-lyase (488 aa).

Mn(2+) is bound at residue asparagine 172. Prenylated FMN is bound by residues isoleucine 175–arginine 177, arginine 189–leucine 191, and arginine 194–glycine 195. Glutamate 238 contacts Mn(2+). The active-site Proton donor is the aspartate 287.

The protein belongs to the UbiD family. Homohexamer. Requires prenylated FMN as cofactor. Mn(2+) is required as a cofactor.

The protein localises to the cell membrane. It catalyses the reaction a 4-hydroxy-3-(all-trans-polyprenyl)benzoate + H(+) = a 2-(all-trans-polyprenyl)phenol + CO2. Its pathway is cofactor biosynthesis; ubiquinone biosynthesis. Functionally, catalyzes the decarboxylation of 3-octaprenyl-4-hydroxy benzoate to 2-octaprenylphenol, an intermediate step in ubiquinone biosynthesis. The sequence is that of 3-octaprenyl-4-hydroxybenzoate carboxy-lyase from Pseudomonas savastanoi pv. phaseolicola (strain 1448A / Race 6) (Pseudomonas syringae pv. phaseolicola (strain 1448A / Race 6)).